Here is a 239-residue protein sequence, read N- to C-terminus: Pyridoxine 5'-phosphate synthase (239 aa).

Asn-7 is a 3-amino-2-oxopropyl phosphate binding site. 9 to 10 (DH) serves as a coordination point for 1-deoxy-D-xylulose 5-phosphate. Arg-18 is a 3-amino-2-oxopropyl phosphate binding site. The active-site Proton acceptor is His-43. Positions 45 and 50 each coordinate 1-deoxy-D-xylulose 5-phosphate. The active-site Proton acceptor is Glu-70. Thr-100 is a 1-deoxy-D-xylulose 5-phosphate binding site. The active-site Proton donor is the His-191. Residues Gly-192 and 213–214 (GH) each bind 3-amino-2-oxopropyl phosphate.

This sequence belongs to the PNP synthase family. In terms of assembly, homooctamer; tetramer of dimers.

The protein resides in the cytoplasm. The catalysed reaction is 3-amino-2-oxopropyl phosphate + 1-deoxy-D-xylulose 5-phosphate = pyridoxine 5'-phosphate + phosphate + 2 H2O + H(+). It participates in cofactor biosynthesis; pyridoxine 5'-phosphate biosynthesis; pyridoxine 5'-phosphate from D-erythrose 4-phosphate: step 5/5. Functionally, catalyzes the complicated ring closure reaction between the two acyclic compounds 1-deoxy-D-xylulose-5-phosphate (DXP) and 3-amino-2-oxopropyl phosphate (1-amino-acetone-3-phosphate or AAP) to form pyridoxine 5'-phosphate (PNP) and inorganic phosphate. This Geobacter sulfurreducens (strain ATCC 51573 / DSM 12127 / PCA) protein is Pyridoxine 5'-phosphate synthase.